The primary structure comprises 150 residues: Large ribosomal subunit protein eL19 (150 aa).

Residues Ile-55–Met-89 are disordered.

It belongs to the eukaryotic ribosomal protein eL19 family. As to quaternary structure, part of the 50S ribosomal subunit.

Functionally, binds to the 23S rRNA. This is Large ribosomal subunit protein eL19 from Pyrococcus furiosus (strain ATCC 43587 / DSM 3638 / JCM 8422 / Vc1).